The primary structure comprises 192 residues: ATP synthase subunit b (192 aa).

Residues 7 to 27 (LLLVLGVMLLATGVALAAGGE) traverse the membrane as a helical segment.

Belongs to the ATPase B chain family. F-type ATPases have 2 components, F(1) - the catalytic core - and F(0) - the membrane proton channel. F(1) has five subunits: alpha(3), beta(3), gamma(1), delta(1), epsilon(1). F(0) has three main subunits: a(1), b(2) and c(10-14). The alpha and beta chains form an alternating ring which encloses part of the gamma chain. F(1) is attached to F(0) by a central stalk formed by the gamma and epsilon chains, while a peripheral stalk is formed by the delta and b chains.

The protein resides in the cell inner membrane. Its function is as follows. F(1)F(0) ATP synthase produces ATP from ADP in the presence of a proton or sodium gradient. F-type ATPases consist of two structural domains, F(1) containing the extramembraneous catalytic core and F(0) containing the membrane proton channel, linked together by a central stalk and a peripheral stalk. During catalysis, ATP synthesis in the catalytic domain of F(1) is coupled via a rotary mechanism of the central stalk subunits to proton translocation. Component of the F(0) channel, it forms part of the peripheral stalk, linking F(1) to F(0). The chain is ATP synthase subunit b from Oleidesulfovibrio alaskensis (strain ATCC BAA-1058 / DSM 17464 / G20) (Desulfovibrio alaskensis).